Consider the following 117-residue polypeptide: 5-hydroxyisourate hydrolase (117 aa).

Residues histidine 7, arginine 45, and tyrosine 114 each coordinate substrate.

It belongs to the transthyretin family. 5-hydroxyisourate hydrolase subfamily. In terms of assembly, homotetramer.

It carries out the reaction 5-hydroxyisourate + H2O = 5-hydroxy-2-oxo-4-ureido-2,5-dihydro-1H-imidazole-5-carboxylate + H(+). Its function is as follows. Catalyzes the hydrolysis of 5-hydroxyisourate (HIU) to 2-oxo-4-hydroxy-4-carboxy-5-ureidoimidazoline (OHCU). In Ralstonia nicotianae (strain ATCC BAA-1114 / GMI1000) (Ralstonia solanacearum), this protein is 5-hydroxyisourate hydrolase.